The primary structure comprises 395 residues: Glyceraldehyde-3-phosphate dehydrogenase, testis-specific (395 aa).

Positions 1–60 are testis-specific N-terminal extension; sequence MSKRDIVLTNVTVVQLLRQPCPEPRVEAEPEPPAQPQPQPEPIKEEVPPPPPPPPAPKKV. Residues 19-59 are disordered; sequence QPCPEPRVEAEPEPPAQPQPQPEPIKEEVPPPPPPPPAPKK. Pro residues-rich tracts occupy residues 31 to 41 and 48 to 57; these read EPPAQPQPQPE and PPPPPPPPAP. NAD(+) is bound by residues 72-73, Asp93, and Lys138; that span reads RI. Residues 210-212, Thr241, 270-271, and Arg293 contribute to the D-glyceraldehyde 3-phosphate site; these read SCT and TG. The Nucleophile role is filled by Cys211. An NAD(+)-binding site is contributed by Asn375.

It belongs to the glyceraldehyde-3-phosphate dehydrogenase family. Homotetramer.

Its subcellular location is the cytoplasm. The enzyme catalyses D-glyceraldehyde 3-phosphate + phosphate + NAD(+) = (2R)-3-phospho-glyceroyl phosphate + NADH + H(+). The protein operates within carbohydrate degradation; glycolysis; pyruvate from D-glyceraldehyde 3-phosphate: step 1/5. Functionally, may play an important role in regulating the switch between different pathways for energy production during spermiogenesis and in the spermatozoon. Required for sperm motility and male fertility. This Bos taurus (Bovine) protein is Glyceraldehyde-3-phosphate dehydrogenase, testis-specific (GAPDHS).